We begin with the raw amino-acid sequence, 376 residues long: Geranylgeranyl transferase type-1 subunit beta (376 aa).

PFTB repeat units lie at residues 128 to 179, 192 to 231, 259 to 301, and 310 to 353; these read KRSL…YICG, TEKL…ALLS, MKFE…HLLT, and TELV…ALIE. Geranylgeranyl diphosphate contacts are provided by residues 216–218 and 280–283; these read HSG and RENK. 2 residues coordinate Zn(2+): Asp286 and Cys288. A geranylgeranyl diphosphate-binding site is contributed by 289–292; that stretch reads YAFW. Position 341 (His341) interacts with Zn(2+).

The protein belongs to the protein prenyltransferase subunit beta family. Heterodimer of an alpha (RAM2) and a beta (CDC43) subunit. Zn(2+) is required as a cofactor. Requires Mg(2+) as cofactor.

It is found in the cytoplasm. The catalysed reaction is geranylgeranyl diphosphate + L-cysteinyl-[protein] = S-geranylgeranyl-L-cysteinyl-[protein] + diphosphate. In terms of biological role, catalyzes the transfer of a geranyl-geranyl moiety from geranyl-geranyl diphosphate to proteins having the C-terminal sequence Cys-Ile-Ile-Leu or Cys-Val-Leu-Leu. Acts, among other substrates, on Rho1 and Rho2 and CDC42 proteins. Participates in a RAS-like C-terminal modification of proteins involved in nuclear division and bud growth. It is involved in bud positioning and cell polarity. The beta subunit is responsible for isoprenoid and peptide-binding. The polypeptide is Geranylgeranyl transferase type-1 subunit beta (CDC43) (Saccharomyces cerevisiae (strain ATCC 204508 / S288c) (Baker's yeast)).